Here is a 277-residue protein sequence, read N- to C-terminus: Undecaprenyl-diphosphatase (277 aa).

Helical transmembrane passes span 11 to 31, 47 to 67, 96 to 116, 123 to 143, 153 to 173, 197 to 217, 227 to 247, and 254 to 274; these read WWQALILGMVQGITEFLPISS, AGASFTAVIQLGSLGAVLIYF, VGILVGTVPIVVAGWAIKAIW, LWVIATAAIGLAVLLGWAEQT, LGIWDGIWVGLAQALSLIPGV, SFLLGIPALFLAGVVEFISEF, LGTLSAFVFSYLSIDWLIQFL, and LFIVYRIGFGLFIILGLALGF.

The protein belongs to the UppP family.

The protein localises to the cell inner membrane. The enzyme catalyses di-trans,octa-cis-undecaprenyl diphosphate + H2O = di-trans,octa-cis-undecaprenyl phosphate + phosphate + H(+). Catalyzes the dephosphorylation of undecaprenyl diphosphate (UPP). Confers resistance to bacitracin. This is Undecaprenyl-diphosphatase from Synechococcus sp. (strain JA-2-3B'a(2-13)) (Cyanobacteria bacterium Yellowstone B-Prime).